A 117-amino-acid chain; its full sequence is Large ribosomal subunit protein bL20 (117 aa).

Belongs to the bacterial ribosomal protein bL20 family.

In terms of biological role, binds directly to 23S ribosomal RNA and is necessary for the in vitro assembly process of the 50S ribosomal subunit. It is not involved in the protein synthesizing functions of that subunit. The protein is Large ribosomal subunit protein bL20 of Pasteurella multocida (strain Pm70).